A 404-amino-acid polypeptide reads, in one-letter code: Argininosuccinate synthase (404 aa).

Residues 12–20 (AYSGGLDTS) and Ala40 each bind ATP. 2 residues coordinate L-citrulline: Tyr92 and Ser97. ATP is bound at residue Gly122. The L-aspartate site is built by Thr124, Asn128, and Asp129. Asn128 provides a ligand contact to L-citrulline. L-citrulline is bound by residues Arg132, Ser181, Ser190, Glu266, and Tyr278.

This sequence belongs to the argininosuccinate synthase family. Type 1 subfamily. Homotetramer.

It localises to the cytoplasm. The catalysed reaction is L-citrulline + L-aspartate + ATP = 2-(N(omega)-L-arginino)succinate + AMP + diphosphate + H(+). The protein operates within amino-acid biosynthesis; L-arginine biosynthesis; L-arginine from L-ornithine and carbamoyl phosphate: step 2/3. This is Argininosuccinate synthase from Photorhabdus laumondii subsp. laumondii (strain DSM 15139 / CIP 105565 / TT01) (Photorhabdus luminescens subsp. laumondii).